The following is a 273-amino-acid chain: 2,3,4,5-tetrahydropyridine-2,6-dicarboxylate N-succinyltransferase (273 aa).

Residues R105 and D142 each coordinate substrate.

The protein belongs to the transferase hexapeptide repeat family. Homotrimer.

The protein localises to the cytoplasm. It carries out the reaction (S)-2,3,4,5-tetrahydrodipicolinate + succinyl-CoA + H2O = (S)-2-succinylamino-6-oxoheptanedioate + CoA. Its pathway is amino-acid biosynthesis; L-lysine biosynthesis via DAP pathway; LL-2,6-diaminopimelate from (S)-tetrahydrodipicolinate (succinylase route): step 1/3. The chain is 2,3,4,5-tetrahydropyridine-2,6-dicarboxylate N-succinyltransferase from Bordetella parapertussis (strain 12822 / ATCC BAA-587 / NCTC 13253).